Consider the following 583-residue polypeptide: ATP-dependent lipid A-core flippase (583 aa).

Transmembrane regions (helical) follow at residues 27 to 47, 69 to 89, 142 to 162, 165 to 185, and 249 to 269; these read LAVA…MVSL, LLVF…TYCL, ALVS…LMFY, WQLS…IGFV, and AAAN…VLYL. An ABC transmembrane type-1 domain is found at 28–310; it reads AVAVVALIIN…LTNVTSQFQR (283 aa). An ABC transporter domain is found at 342–578; sequence VNVKDISFTY…DGAYAQLHRI (237 aa). ATP is bound at residue 376-383; it reads GRSGSGKS.

This sequence belongs to the ABC transporter superfamily. Lipid exporter (TC 3.A.1.106) family. In terms of assembly, homodimer.

It is found in the cell inner membrane. The catalysed reaction is ATP + H2O + lipid A-core oligosaccharideSide 1 = ADP + phosphate + lipid A-core oligosaccharideSide 2.. In terms of biological role, involved in lipopolysaccharide (LPS) biosynthesis. Translocates lipid A-core from the inner to the outer leaflet of the inner membrane. Transmembrane domains (TMD) form a pore in the inner membrane and the ATP-binding domain (NBD) is responsible for energy generation. In Vibrio vulnificus (strain YJ016), this protein is ATP-dependent lipid A-core flippase.